Consider the following 227-residue polypeptide: Zinc finger protein 511 (227 aa).

C2H2-type zinc fingers lie at residues 80 to 105 (FTCQVAGCCQVFAAIEDYQHHYHMMH), 107 to 130 (NTCSFCNRAFPSGHLLDVHILEWH), and 144 to 169 (YQCLVESCPEKFKTSQDRKDHMVRLH). A disordered region spans residues 180 to 204 (PKTNRGPAMPAAADAATRAPTDDSD). Low complexity predominate over residues 186–198 (PAMPAAADAATRA).

Belongs to the krueppel C2H2-type zinc-finger protein family.

The protein localises to the nucleus. Functionally, may be involved in transcriptional regulation. This is Zinc finger protein 511 (Znf511) from Mus musculus (Mouse).